A 303-amino-acid polypeptide reads, in one-letter code: UDP-3-O-acyl-N-acetylglucosamine deacetylase (303 aa).

Zn(2+)-binding residues include His78, His237, and Asp241. Catalysis depends on His264, which acts as the Proton donor.

It belongs to the LpxC family. Requires Zn(2+) as cofactor.

The catalysed reaction is a UDP-3-O-[(3R)-3-hydroxyacyl]-N-acetyl-alpha-D-glucosamine + H2O = a UDP-3-O-[(3R)-3-hydroxyacyl]-alpha-D-glucosamine + acetate. It participates in glycolipid biosynthesis; lipid IV(A) biosynthesis; lipid IV(A) from (3R)-3-hydroxytetradecanoyl-[acyl-carrier-protein] and UDP-N-acetyl-alpha-D-glucosamine: step 2/6. In terms of biological role, catalyzes the hydrolysis of UDP-3-O-myristoyl-N-acetylglucosamine to form UDP-3-O-myristoylglucosamine and acetate, the committed step in lipid A biosynthesis. In Coxiella burnetii (strain CbuG_Q212) (Coxiella burnetii (strain Q212)), this protein is UDP-3-O-acyl-N-acetylglucosamine deacetylase.